The primary structure comprises 422 residues: Tryptophan synthase beta chain (422 aa).

At K111 the chain carries N6-(pyridoxal phosphate)lysine.

Belongs to the TrpB family. In terms of assembly, tetramer of two alpha and two beta chains. Requires pyridoxal 5'-phosphate as cofactor.

It catalyses the reaction (1S,2R)-1-C-(indol-3-yl)glycerol 3-phosphate + L-serine = D-glyceraldehyde 3-phosphate + L-tryptophan + H2O. Its pathway is amino-acid biosynthesis; L-tryptophan biosynthesis; L-tryptophan from chorismate: step 5/5. Functionally, the beta subunit is responsible for the synthesis of L-tryptophan from indole and L-serine. The sequence is that of Tryptophan synthase beta chain from Pseudothermotoga lettingae (strain ATCC BAA-301 / DSM 14385 / NBRC 107922 / TMO) (Thermotoga lettingae).